A 260-amino-acid chain; its full sequence is Glutathione S-transferase domain-containing protein DDB_G0274223 (260 aa).

The GST N-terminal domain occupies 7–96 (KVDYIFYTNN…YLAQKYNTFL (90 aa)). In terms of domain architecture, GST C-terminal spans 102–233 (NPHENSDVIT…GFKTFNPSAL (132 aa)).

It belongs to the GST superfamily.

The polypeptide is Glutathione S-transferase domain-containing protein DDB_G0274223 (Dictyostelium discoideum (Social amoeba)).